The following is a 105-amino-acid chain: Large ribosomal subunit protein bL21 (105 aa).

Belongs to the bacterial ribosomal protein bL21 family. In terms of assembly, part of the 50S ribosomal subunit. Contacts protein L20.

Functionally, this protein binds to 23S rRNA in the presence of protein L20. The protein is Large ribosomal subunit protein bL21 of Dictyoglomus turgidum (strain DSM 6724 / Z-1310).